Consider the following 425-residue polypeptide: Serine hydroxymethyltransferase (425 aa).

(6S)-5,6,7,8-tetrahydrofolate-binding positions include leucine 124 and 128 to 130; that span reads GHL. Lysine 233 carries the post-translational modification N6-(pyridoxal phosphate)lysine.

It belongs to the SHMT family. As to quaternary structure, homodimer. Requires pyridoxal 5'-phosphate as cofactor.

The protein localises to the cytoplasm. The enzyme catalyses (6R)-5,10-methylene-5,6,7,8-tetrahydrofolate + glycine + H2O = (6S)-5,6,7,8-tetrahydrofolate + L-serine. It functions in the pathway one-carbon metabolism; tetrahydrofolate interconversion. The protein operates within amino-acid biosynthesis; glycine biosynthesis; glycine from L-serine: step 1/1. In terms of biological role, catalyzes the reversible interconversion of serine and glycine with tetrahydrofolate (THF) serving as the one-carbon carrier. This reaction serves as the major source of one-carbon groups required for the biosynthesis of purines, thymidylate, methionine, and other important biomolecules. Also exhibits THF-independent aldolase activity toward beta-hydroxyamino acids, producing glycine and aldehydes, via a retro-aldol mechanism. This is Serine hydroxymethyltransferase from Clavibacter sepedonicus (Clavibacter michiganensis subsp. sepedonicus).